The sequence spans 602 residues: Cholinesterase (602 aa).

The signal sequence occupies residues 1-28; sequence MQSKGTIISIQFLLRFLLLWVLIGKSHT. Asn-85 is a glycosylation site (N-linked (GlcNAc...) asparagine). A disulfide bridge connects residues Cys-93 and Cys-120. Asn-134 is a glycosylation site (N-linked (GlcNAc...) asparagine). 144 to 145 is a binding site for substrate; the sequence is GG. Ser-226 (acyl-ester intermediate) is an active-site residue. The residue at position 226 (Ser-226) is a Phosphoserine. Asn-269 and Asn-284 each carry an N-linked (GlcNAc...) asparagine glycan. Cys-280 and Cys-291 are disulfide-bonded. Residue Glu-353 is the Charge relay system of the active site. Asn-369 carries an N-linked (GlcNAc...) asparagine glycan. A disulfide bridge links Cys-428 with Cys-547. Residue His-466 is the Charge relay system of the active site. 4 N-linked (GlcNAc...) asparagine glycosylation sites follow: Asn-483, Asn-509, Asn-513, and Asn-514.

The protein belongs to the type-B carboxylesterase/lipase family. In terms of assembly, homotetramer; disulfide-linked. Dimer of dimers.

Its subcellular location is the secreted. It catalyses the reaction an acylcholine + H2O = a carboxylate + choline + H(+). Its function is as follows. Esterase with broad substrate specificity. Contributes to the inactivation of the neurotransmitter acetylcholine. Can degrade neurotoxic organophosphate esters. This chain is Cholinesterase (BCHE), found in Felis catus (Cat).